Here is a 139-residue protein sequence, read N- to C-terminus: Protein FAM237B (139 aa).

An N-terminal signal peptide occupies residues 1 to 24; it reads MCFATRRWFYLHLGCMMLINLVNA. Met112 carries the post-translational modification Methionine amide. Positions 113–139 are cleaved as a propeptide — removed in the mature form; the sequence is GRRQVMPPKYNFPQKITGGNLNVYLRE.

The active form requires C-terminal amidation and disulfide bond formation.

The protein resides in the secreted. In terms of biological role, may be capable of activating GPR83 via the GNAQ signaling pathway. The chain is Protein FAM237B from Homo sapiens (Human).